The primary structure comprises 182 residues: Acireductone dioxygenase (182 aa).

Fe(2+)-binding residues include His-100, His-102, Glu-106, and His-145. Ni(2+) contacts are provided by His-100, His-102, Glu-106, and His-145.

This sequence belongs to the acireductone dioxygenase (ARD) family. In terms of assembly, monomer. It depends on Fe(2+) as a cofactor. Requires Ni(2+) as cofactor.

The catalysed reaction is 1,2-dihydroxy-5-(methylsulfanyl)pent-1-en-3-one + O2 = 3-(methylsulfanyl)propanoate + CO + formate + 2 H(+). It catalyses the reaction 1,2-dihydroxy-5-(methylsulfanyl)pent-1-en-3-one + O2 = 4-methylsulfanyl-2-oxobutanoate + formate + 2 H(+). It functions in the pathway amino-acid biosynthesis; L-methionine biosynthesis via salvage pathway; L-methionine from S-methyl-5-thio-alpha-D-ribose 1-phosphate: step 5/6. Functionally, catalyzes 2 different reactions between oxygen and the acireductone 1,2-dihydroxy-3-keto-5-methylthiopentene (DHK-MTPene) depending upon the metal bound in the active site. Fe-containing acireductone dioxygenase (Fe-ARD) produces formate and 2-keto-4-methylthiobutyrate (KMTB), the alpha-ketoacid precursor of methionine in the methionine recycle pathway. Ni-containing acireductone dioxygenase (Ni-ARD) produces methylthiopropionate, carbon monoxide and formate, and does not lie on the methionine recycle pathway. In Trichormus variabilis (strain ATCC 29413 / PCC 7937) (Anabaena variabilis), this protein is Acireductone dioxygenase.